A 611-amino-acid chain; its full sequence is Oligoendopeptidase F homolog (611 aa).

Residue His384 participates in Zn(2+) binding. Glu385 is a catalytic residue. Zn(2+)-binding residues include His388 and His391.

It belongs to the peptidase M3B family. Requires Zn(2+) as cofactor.

This Mycoplasma pneumoniae (strain ATCC 29342 / M129 / Subtype 1) (Mycoplasmoides pneumoniae) protein is Oligoendopeptidase F homolog (pepF).